We begin with the raw amino-acid sequence, 317 residues long: MTQESINQPIVVAALYKFVTLSDYVAFREPLLQAMVDNGIKGTLLIADEGINGTVSGSREGIDGLMAWLKSDPRLIDIDHKESYCDEQPFYRTKVKLKKEIVTLGVEGVDPNKSVGTYVEPKDWNDLITDPEVLLIDTRNDYEVSIGTFEGAIDPKTTSFREFPEYIKAHFDPAVHKKVAMFCTGGIRCEKASSYMLGEGFEEVYHLKGGILKYLEEVPEQESQWRGECFVFDNRVTVRHDLTEGDYDQCHACRTPISAEDRASEHYAPGVSCPHCWDSLSEKTRRSAIDRQKQIELAKARNQPHPIGRNYRLPSEA.

The region spanning 129–223 (TDPEVLLIDT…YLEEVPEQES (95 aa)) is the Rhodanese domain. Cys-183 serves as the catalytic Cysteine persulfide intermediate. The interval 298 to 317 (AKARNQPHPIGRNYRLPSEA) is disordered.

It belongs to the TrhO family.

The catalysed reaction is uridine(34) in tRNA + AH2 + O2 = 5-hydroxyuridine(34) in tRNA + A + H2O. Catalyzes oxygen-dependent 5-hydroxyuridine (ho5U) modification at position 34 in tRNAs. In Pseudomonas syringae pv. tomato (strain ATCC BAA-871 / DC3000), this protein is tRNA uridine(34) hydroxylase.